A 457-amino-acid chain; its full sequence is Protein PIN-LIKES 2 (457 aa).

The Lumenal segment spans residues 1-15 (MSGFSSGNVNSRVVD). The chain crosses the membrane as a helical span at residues 16–36 (ILSGVVPLLKLICLTVIGLLL). Over 37–54 (AHPKTQLVPRATFRLLSK) the chain is Cytoplasmic. A helical membrane pass occupies residues 55–75 (LVFALFLPCLIFTELGESITL). Over 76-85 (DNIVQWWFIP) the chain is Lumenal. The helical transmembrane segment at 86 to 106 (VNVLLSAVVGSLIGYLVVLIC) threads the bilayer. Over 107 to 116 (RPPPEFNRFT) the chain is Cytoplasmic. Residues 117–137 (IVMTAFGNTGNLLLAIVSSVC) form a helical membrane-spanning segment. At 138–151 (HTKTNPFGPNCNSR) the chain is on the lumenal side. A helical membrane pass occupies residues 152-172 (GVSYVSFAQWVAVILVYTVVY). At 173 to 291 (HMMEPPLEYY…PVKHILQPPT (119 aa)) the chain is on the cytoplasmic side. The helical transmembrane segment at 292–312 (IASLLAIIIGSVPQLKSVVFG) threads the bilayer. Over 313–322 (YDAPLSFITD) the chain is Lumenal. A helical transmembrane segment spans residues 323–343 (SLNIMGSAMVPSVMLVLGGML). Over 344-356 (SEGPNESTLGLRT) the chain is Cytoplasmic. The helical transmembrane segment at 357 to 377 (TIGISVARLLVLPLVGIGIVM) threads the bilayer. The Lumenal segment spans residues 378 to 393 (SADKLGLISSADPMFK). Residues 394 to 414 (FVLLLQYSTPSAILLGAIASL) traverse the membrane as a helical segment. Topologically, residues 415–424 (RGYAVREASA) are cytoplasmic. The helical transmembrane segment at 425–445 (LLFWQHIFALLSLTFYIVIFF) threads the bilayer. Residues 446 to 457 (KLTVETTVQGMQ) are Lumenal-facing.

The protein belongs to the auxin efflux carrier (TC 2.A.69.2) family. As to expression, expressed in seedlings, rosette and cauline leaves, flowers and siliques.

The protein resides in the endoplasmic reticulum membrane. Functionally, involved in cellular auxin homeostasis by regulating auxin metabolism. Regulates intracellular auxin accumulation at the endoplasmic reticulum and thus auxin availability for nuclear auxin signaling. This is Protein PIN-LIKES 2 from Arabidopsis thaliana (Mouse-ear cress).